We begin with the raw amino-acid sequence, 1763 residues long: Genome polyprotein (1763 aa).

The SF3 helicase domain occupies 458–614 (DGVITSCNKR…ESHKRARPGT (157 aa)). An ATP-binding site is contributed by 484 to 491 (GPPGCGKT). Position 984 is an O-(5'-phospho-RNA)-tyrosine (Tyr984). Position 1040 is a phosphothreonine (Thr1040). The residue at position 1067 (Ser1067) is a Phosphoserine. Residues 1073-1229 (GPGTKFHKNA…KLVVPYIHID (157 aa)) form the Peptidase C24 domain. Catalysis depends on for 3CLpro activity residues His1110, Glu1131, and Cys1193. A RdRp catalytic domain is found at 1478–1603 (AKVFAVDYSK…MFPTMFASVS (126 aa)).

In terms of assembly, homodimer. Interacts with NTPase, protein p30 and protease-polymerase p76. As to quaternary structure, interacts with capsid protein VP1 and protease-polymerase p76. Interacts with host IEF4e; this interaction plays a role in translation of viral proteins. Homooligomer. Interacts with Vpg, protein p32 and may interact with capsid protein VP1. In terms of processing, specific enzymatic cleavages in vivo yield mature proteins. Pro-Pol is first autocatalytically cleaved, then processes the whole polyprotein. Post-translationally, VPg is uridylylated by the polymerase and is covalently attached to the 5'-end of the polyadenylated genomic and subgenomic RNAs. This uridylylated form acts as a nucleotide-peptide primer for the polymerase.

Its subcellular location is the host endoplasmic reticulum membrane. It catalyses the reaction a ribonucleoside 5'-triphosphate + H2O = a ribonucleoside 5'-diphosphate + phosphate + H(+). The catalysed reaction is RNA(n) + a ribonucleoside 5'-triphosphate = RNA(n+1) + diphosphate. It carries out the reaction Endopeptidase with a preference for cleavage when the P1 position is occupied by Glu-|-Xaa and the P1' position is occupied by Gly-|-Yaa.. In terms of biological role, together with NTPase and NS4, initiates the formation of the replication complex. Induces the proliferation of the host smooth ER membranes forming long tubular structures. These remodeled membranes probably form the viral factories that contain the replication complex. Its function is as follows. Displays NTPase activity, but no helicase activity. Induces the formation of convoluted membranes derived from the host ER. These remodeled membranes probably form the viral factories that contain the replication complex. Together with NS2 and NS4, initiates the formation of the replication complex. Functionally, probable key protein responsible for the formation of membrane alterations by the virus. Induces the formation of convoluted membranes derived from the host ER. These remodeled membranes probably form the viral factories that contain the replication complex. Together with NS2 and NTPase, initiates the formation of the replication complex. Viral genome-linked protein is covalently linked to the 5'-end of the positive-strand, negative-strand genomic RNAs and subgenomic RNA. Acts as a genome-linked replication primer. May recruit ribosome to viral RNA thereby promoting viral proteins translation. Interacts with host translation initiation complex to allow the translation of viral proteins. In terms of biological role, protease-polymerase p76 processes the polyprotein: Pro-Pol is first released by autocleavage, then all other proteins are cleaved. Cleaves host translation initiation factor eIF4G1, eIF4G2 and PABP1 thereby inducing a shutdown of host protein synthesis. This shutdown may not prevent viral mRNA from being translated since viral Vpg replaces the cap. Also functions as an RNA-directed RNA polymerase, which replicates genomic and antigenomic viral RNA by recognizing specific signals. Also transcribes a subgenomic mRNA by initiating RNA synthesis internally on antigenomic RNA. This sgRNA codes for structural proteins. Catalyzes the covalent attachment VPg with viral RNAs. Cleaves host G3BP1 thereby preventing the assembly of host stress granules. The sequence is that of Genome polyprotein from Feline calicivirus (strain Japanese F4) (FCV).